Reading from the N-terminus, the 130-residue chain is MSMQDPIADMLTRIRNGQAANKVAISMPSSKLKVAIANVLAKEGYVESFRIIEDSKPELEITLKYFQNKPVVESIQRISRPGIRIYKRKDELPKVMGGLGIAIVSTSKGVMTDRAAREEGLGGEIICYVA.

This sequence belongs to the universal ribosomal protein uS8 family. As to quaternary structure, part of the 30S ribosomal subunit. Contacts proteins S5 and S12.

In terms of biological role, one of the primary rRNA binding proteins, it binds directly to 16S rRNA central domain where it helps coordinate assembly of the platform of the 30S subunit. In Haemophilus ducreyi (strain 35000HP / ATCC 700724), this protein is Small ribosomal subunit protein uS8.